A 347-amino-acid chain; its full sequence is Nod factor export ATP-binding protein I (347 aa).

Positions 1-11 (MGENMEREMLR) are enriched in basic and acidic residues. The disordered stretch occupies residues 1–32 (MGENMEREMLRPKTIAMDQNSASARSNPEREI). Polar residues predominate over residues 17-26 (MDQNSASARS). In terms of domain architecture, ABC transporter spans 49-279 (IDLQAVTMIY…IIGCPVIEVY (231 aa)). 81–88 (GPNGAGKS) contacts ATP.

This sequence belongs to the ABC transporter superfamily. Lipooligosaccharide exporter (TC 3.A.1.102) family. In terms of assembly, the complex is composed of two ATP-binding proteins (NodI) and two transmembrane proteins (NodJ).

The protein resides in the cell inner membrane. In terms of biological role, part of the ABC transporter complex NodIJ involved in the export of the nodulation factors (Nod factors), the bacterial signal molecules that induce symbiosis and subsequent nodulation induction. Nod factors are LCO (lipo-chitin oligosaccharide), a modified beta-1,4-linked N-acetylglucosamine oligosaccharide. This subunit is responsible for energy coupling to the transport system. The polypeptide is Nod factor export ATP-binding protein I (Neorhizobium galegae (Rhizobium galegae)).